A 466-amino-acid polypeptide reads, in one-letter code: Argininosuccinate lyase (466 aa).

Positions 27, 114, and 159 each coordinate 2-(N(omega)-L-arginino)succinate. Catalysis depends on histidine 160, which acts as the Proton acceptor. The active-site Proton donor is the serine 281. 2-(N(omega)-L-arginino)succinate contacts are provided by asparagine 289, tyrosine 321, glutamine 326, and lysine 329.

It belongs to the lyase 1 family. Argininosuccinate lyase subfamily. As to quaternary structure, homotetramer. Eye lens.

It carries out the reaction 2-(N(omega)-L-arginino)succinate = fumarate + L-arginine. It participates in amino-acid biosynthesis; L-arginine biosynthesis; L-arginine from L-ornithine and carbamoyl phosphate: step 3/3. Delta crystallin, the principal crystallin in embryonic lens, is found only in birds and reptiles. This protein may also function as an enzymatically active argininosuccinate lyase. The protein is Argininosuccinate lyase (ASL2) of Gallus gallus (Chicken).